The sequence spans 634 residues: 1-deoxy-D-xylulose-5-phosphate synthase (634 aa).

Residues His77 and 118-120 (GHA) contribute to the thiamine diphosphate site. Residue Asp149 coordinates Mg(2+). Residues 150 to 151 (AS), Asn178, Tyr289, and Glu371 each bind thiamine diphosphate. Asn178 provides a ligand contact to Mg(2+).

It belongs to the transketolase family. DXPS subfamily. As to quaternary structure, homodimer. It depends on Mg(2+) as a cofactor. Thiamine diphosphate is required as a cofactor.

The catalysed reaction is D-glyceraldehyde 3-phosphate + pyruvate + H(+) = 1-deoxy-D-xylulose 5-phosphate + CO2. It participates in metabolic intermediate biosynthesis; 1-deoxy-D-xylulose 5-phosphate biosynthesis; 1-deoxy-D-xylulose 5-phosphate from D-glyceraldehyde 3-phosphate and pyruvate: step 1/1. Functionally, catalyzes the acyloin condensation reaction between C atoms 2 and 3 of pyruvate and glyceraldehyde 3-phosphate to yield 1-deoxy-D-xylulose-5-phosphate (DXP). This is 1-deoxy-D-xylulose-5-phosphate synthase from Leptospira interrogans serogroup Icterohaemorrhagiae serovar copenhageni (strain Fiocruz L1-130).